A 72-amino-acid chain; its full sequence is Hypotensin (72 aa).

The N-terminal stretch at 1-24 is a signal peptide; it reads MKMMIAVFVSILLLMFSLSSTAMG. 2 propeptides span residues 25 to 35 and 61 to 72; these read METEQQNMEER and RFDPATFGENED.

The protein belongs to the non-disulfide-bridged peptide (NDBP) superfamily. As to expression, expressed by the venom gland.

Its subcellular location is the secreted. In terms of biological role, potentiates the hypotensive action of bradykinin (BK) in normotensive rats, and induces a vasorelaxant effect in mesenteric artery rings that is induced by endothelium-dependent release of nitric oxide (NO). Does not inhibit angiotensin converting enzyme (ACE). Shows neither hemolytic activity nor cytotoxicity to normal and cancer cells. Shows moderate antimicrobial activity against the fungi Candida albicans and the filamentous fungus Trichophyton rubrum, as well as against the bacteria C.albicans (MIC=128 ug/mL), C.tropicalis (MIC=128 ug/mL) and Aspergillus flavus (MIC=128 ug/mL). Has no antimicrobial activity against S.aureus, S.epidermidis and P.aeruginosa. The polypeptide is Hypotensin (Tityus stigmurus (Brazilian scorpion)).